We begin with the raw amino-acid sequence, 591 residues long: NADPH oxidase 1 (591 aa).

The Cytoplasmic portion of the chain corresponds to 1–36 (MAGELRGSRGPLQRIQIAPREAPNLHLTMGNWLVNH). Residues 37 to 59 (WLSVLFLVSWLGLNIFLFVYAFL) traverse the membrane as a helical segment. Residues 60–72 (NYEKSDKYYYTRE) are Extracellular-facing. The chain crosses the membrane as a helical span at residues 73-97 (ILGTALALARASALCLNFNSMMILI). A Ferric oxidoreductase domain is found at 82–316 (RASALCLNFN…YIFERILRFY (235 aa)). At 98 to 130 (PVCRNLLSFLRGTCSFCNRTLRKPLDHNLTFHK) the chain is on the cytoplasmic side. 2 residues coordinate heme: His-129 and His-143. Residues 131-151 (LVAYMICIFTVIHIIAHLFNF) traverse the membrane as a helical segment. The Extracellular portion of the chain corresponds to 152–195 (ERYRRSQQAMDGSLASVLSSLSHPEKEDSWLNPIQSPNMTVMYA). Asn-189 carries N-linked (GlcNAc...) asparagine glycosylation. Residues 196 to 216 (AFTSIAGLTGVIATVALVLMV) traverse the membrane as a helical segment. Residues 217-234 (TSAMEFIRRNYFELFWYT) lie on the Cytoplasmic side of the membrane. A helical transmembrane segment spans residues 235-255 (HHLFIVYIICLGIHGLGGIVR). Positions 236 and 248 each coordinate heme. Topologically, residues 256–423 (GQTEESLGES…TVSEDVFQYE (168 aa)) are extracellular. Asn-269 carries an N-linked (GlcNAc...) asparagine glycan. An FAD-binding FR-type domain is found at 317–418 (RSQQKVVITK…DGPFGTVSED (102 aa)). Residue 365–371 (HPFTLTS) coordinates FAD. Residues 424-444 (VAVLVGAGIGVTPFASILKSI) form a helical membrane-spanning segment. An interaction with NOXO1 region spans residues 424–563 (VAVLVGAGIG…GVFLCGPRTL (140 aa)). Residues 445–591 (WYKFQRADNK…VQFYFNKETF (147 aa)) are Cytoplasmic-facing. Residue Thr-457 is modified to Phosphothreonine.

NOX1, NOXA1, NOXO1, RAC1 and CYBA forms a functional multimeric complex supporting ROS production. Interacts with NOXO1. Interacts (via FAD-binding FR-type domain) with ARHGEF7 (via PH domain). Interacts with NOXA1. It depends on FAD as a cofactor. Post-translationally, phosphorylation at Thr-457 mediated by PKC/PRKBC positively regulates its interaction with NOXA1 and enzyme activity. Expressed in colon and vascular smooth muscle cells (VSMC).

The protein resides in the cell projection. Its subcellular location is the invadopodium membrane. The protein localises to the cell membrane. It carries out the reaction NADPH + 2 O2 = 2 superoxide + NADP(+) + H(+). The oxidase activity is potentiated by NOXA1 and NOXO1. In terms of biological role, NADPH oxidase that catalyzes the generation of superoxide from molecular oxygen utilizing NADPH as an electron donor. The protein is NADPH oxidase 1 (Nox1) of Mus musculus (Mouse).